The primary structure comprises 459 residues: Cysteine--tRNA ligase (459 aa).

Zn(2+) is bound at residue Cys-28. Residues 30-40 carry the 'HIGH' region motif; it reads VTVYDLCHFGH. Zn(2+) is bound by residues Cys-209, His-234, and Glu-238. The 'KMSKS' region motif lies at 266-270; it reads KMSKS. Residue Lys-269 participates in ATP binding.

Belongs to the class-I aminoacyl-tRNA synthetase family. As to quaternary structure, monomer. Requires Zn(2+) as cofactor.

The protein localises to the cytoplasm. It carries out the reaction tRNA(Cys) + L-cysteine + ATP = L-cysteinyl-tRNA(Cys) + AMP + diphosphate. This Glaesserella parasuis serovar 5 (strain SH0165) (Haemophilus parasuis) protein is Cysteine--tRNA ligase.